Reading from the N-terminus, the 900-residue chain is Iodate reductase subunit IdrA (900 aa).

The disordered stretch occupies residues 1 to 21; the sequence is MSENIKQGGAGTFMQAPQDSV. C35, C38, and C42 together coordinate [3Fe-4S] cluster.

The protein belongs to the prokaryotic molybdopterin-containing oxidoreductase family. In terms of assembly, the iodate reductase (Idr) complex is composed of a molybdopterin-dependent iodate reductase (IdrA and IdrB subunits) and two associated peroxidases (IdrP1 and IdrP2). The cofactor is [3Fe-4S] cluster. Mo-bis(molybdopterin guanine dinucleotide) is required as a cofactor.

Its subcellular location is the periplasm. In terms of biological role, involved in iodate respiration. May accept electrons from cytochrome c551, and catalyze the reduction of iodate (IO(3)(-)) to produce the chemically unstable intermediate hypoiodous acid (HIO). This intermediate then undergoes abiotic disproportionation to yield two molecules of iodide (I(-)) and one molecule of iodate. The resultant iodate subsequently cycles back into the reductive pathway. The initial reduction of iodate may inadvertently produce low levels of incidental toxic H(2)O(2), which is detoxified by IdrP1 and IdrP2. The protein is Iodate reductase subunit IdrA of Denitromonas iodatirespirans.